A 43-amino-acid polypeptide reads, in one-letter code: Protein PsbN (43 aa).

Residues 5–27 traverse the membrane as a helical segment; the sequence is TLVAISISGLLVSFTGYALYTAF.

This sequence belongs to the PsbN family.

It localises to the plastid. It is found in the chloroplast thylakoid membrane. Its function is as follows. May play a role in photosystem I and II biogenesis. The sequence is that of Protein PsbN from Houttuynia cordata (Chameleon plant).